The chain runs to 587 residues: Probable intramembrane protease YKL100C (587 aa).

Residues 1 to 85 (MDKYLNSFVD…HSLVFNYATL (85 aa)) are Lumenal-facing. A helical membrane pass occupies residues 86 to 106 (VLIASALVVIGSFTSISSIPF). Over 107–156 (TALPPTREHSLFDPTDFDVDHDCHVIYRENDEDKKKKKKSKRFFDMMDEK) the chain is Cytoplasmic. The chain crosses the membrane as a helical span at residues 157–177 (HAIILPLTSGCTLLALYFVIK). Topologically, residues 178–192 (KLHLNWLKYVVKILN) are lumenal. The chain crosses the membrane as a helical span at residues 193–213 (FNITLLNIPAGTFVYSYFLNS). Over 214–303 (LFRNLSHLAS…KSKRQISNMY (90 aa)) the chain is Cytoplasmic. A helical transmembrane segment spans residues 304–324 (LNSALIVSFVLSIVSTVYFYL). At 325–328 (SPND) the chain is on the lumenal side. A helical membrane pass occupies residues 329-349 (WLISNAVSMNMAIWSIAQLKL). Residues 350 to 351 (KN) lie on the Cytoplasmic side of the membrane. Residues 352–372 (LKSGALILIALFFYDICFVFG) form a helical membrane-spanning segment. D366 is a catalytic residue. The Lumenal portion of the chain corresponds to 373–401 (TDVMVTVATNLDIPVKLSLPVKFNTAQNN). A helical transmembrane segment spans residues 402–422 (FNFSILGLGDIALPGMFIAMC). Residue D411 is part of the active site. Residues 423 to 450 (YKYDIWKWHLDHDDTEFHFLNWSYVGKY) lie on the Cytoplasmic side of the membrane. Residues 451-471 (FITAMVSYVASLVSAMVSLSI) form a helical membrane-spanning segment. The Lumenal portion of the chain corresponds to 472–475 (FNTA). A helical transmembrane segment spans residues 476-496 (QPALLYIVPSLLISTILVACW). Positions 477-479 (PAL) match the PAL motif. The Cytoplasmic segment spans residues 497 to 587 (NKDFKQFWNF…EEDLLDDESS (91 aa)). The disordered stretch occupies residues 561–587 (EFVQEEDLSDSSEEELSEEDLLDDESS).

This sequence belongs to the peptidase A22B family.

Its subcellular location is the membrane. It is found in the endoplasmic reticulum membrane. Its function is as follows. May act as intramembrane protease. This is Probable intramembrane protease YKL100C from Saccharomyces cerevisiae (strain ATCC 204508 / S288c) (Baker's yeast).